Reading from the N-terminus, the 223-residue chain is Adenylate kinase 4, mitochondrial (223 aa).

An a ribonucleoside 5'-triphosphate-binding site is contributed by 15 to 20 (GSGKGT). Residues 35 to 64 (SSGHFLRENIKANTEVGEMAKQYIEKSLLV) are NMP. Serine 36 and arginine 41 together coordinate AMP. Position 60 is an N6-succinyllysine (lysine 60). Residues 62–64 (LLV), 89–92 (GFPR), and glutamine 96 each bind AMP. The segment at 125-162 (RRWIHPPSGRVYNLDFNPPHVHGIDDVTGEPLVQQEDD) is LID. Residues arginine 126 and 135–136 (VY) each bind a ribonucleoside 5'-triphosphate. Arginine 170 contacts AMP. At lysine 175 the chain carries N6-acetyllysine. N6-acetyllysine; alternate occurs at positions 179 and 186. Lysine 179 and lysine 186 each carry N6-succinyllysine; alternate. Threonine 199 is an a ribonucleoside 5'-triphosphate binding site.

The protein belongs to the adenylate kinase family. AK3 subfamily. As to quaternary structure, monomer. Interacts with SLC25A5/ANT2.

The protein resides in the mitochondrion matrix. The catalysed reaction is a ribonucleoside 5'-phosphate + ATP = a ribonucleoside 5'-diphosphate + ADP. It carries out the reaction AMP + ATP = 2 ADP. It catalyses the reaction GTP + AMP = GDP + ADP. The enzyme catalyses CMP + ATP = CDP + ADP. The catalysed reaction is GTP + CMP = CDP + GDP. It carries out the reaction dAMP + ATP = dADP + ADP. It catalyses the reaction dCMP + ATP = dCDP + ADP. The enzyme catalyses a 2'-deoxyribonucleoside 5'-diphosphate + ATP = a 2'-deoxyribonucleoside 5'-triphosphate + ADP. The catalysed reaction is a ribonucleoside 5'-diphosphate + ATP = a ribonucleoside 5'-triphosphate + ADP. It carries out the reaction GDP + ATP = GTP + ADP. It catalyses the reaction CDP + GTP = CTP + GDP. The enzyme catalyses CDP + ATP = CTP + ADP. The catalysed reaction is UDP + ATP = UTP + ADP. It carries out the reaction GTP + UDP = UTP + GDP. It catalyses the reaction dADP + GTP = dATP + GDP. The enzyme catalyses dCDP + GTP = dCTP + GDP. The catalysed reaction is dCDP + ATP = dCTP + ADP. It carries out the reaction dGDP + ATP = dGTP + ADP. It catalyses the reaction dTDP + GTP = dTTP + GDP. The enzyme catalyses dTDP + ATP = dTTP + ADP. Broad-specificity mitochondrial nucleoside phosphate kinase involved in cellular nucleotide homeostasis by catalyzing nucleoside-phosphate interconversions. Similar to other adenylate kinases, preferentially catalyzes the phosphorylation of the nucleoside monophosphate AMP with ATP as phosphate donor to produce ADP. Phosphorylates only AMP when using GTP as phosphate donor. In vitro, can also catalyze the phosphorylation of CMP, dAMP and dCMP and use GTP as an alternate phosphate donor. Moreover, exhibits a diphosphate kinase activity, producing ATP, CTP, GTP, UTP, TTP, dATP, dCTP and dGTP from the corresponding diphosphate substrates with either ATP or GTP as phosphate donors. Plays a role in controlling cellular ATP levels by regulating phosphorylation and activation of the energy sensor protein kinase AMPK. Plays a protective role in the cellular response to oxidative stress. This is Adenylate kinase 4, mitochondrial from Pongo abelii (Sumatran orangutan).